We begin with the raw amino-acid sequence, 266 residues long: ATP synthase subunit a (266 aa).

A run of 5 helical transmembrane segments spans residues 28–48 (SINV…LVIF), 88–108 (LIAP…MMDL), 141–161 (DVNI…FYSI), 206–226 (LFGN…LLPW), and 237–257 (AIFH…LTVV).

This sequence belongs to the ATPase A chain family. F-type ATPases have 2 components, CF(1) - the catalytic core - and CF(0) - the membrane proton channel. CF(1) has five subunits: alpha(3), beta(3), gamma(1), delta(1), epsilon(1). CF(0) has three main subunits: a(1), b(2) and c(9-12). The alpha and beta chains form an alternating ring which encloses part of the gamma chain. CF(1) is attached to CF(0) by a central stalk formed by the gamma and epsilon chains, while a peripheral stalk is formed by the delta and b chains.

It is found in the cell inner membrane. Functionally, key component of the proton channel; it plays a direct role in the translocation of protons across the membrane. This chain is ATP synthase subunit a, found in Pectobacterium atrosepticum (strain SCRI 1043 / ATCC BAA-672) (Erwinia carotovora subsp. atroseptica).